Here is a 184-residue protein sequence, read N- to C-terminus: Large ribosomal subunit protein uL5 (184 aa).

It belongs to the universal ribosomal protein uL5 family. Part of the 50S ribosomal subunit; part of the 5S rRNA/L5/L18/L25 subcomplex. Contacts the 5S rRNA and the P site tRNA. Forms a bridge to the 30S subunit in the 70S ribosome.

Its function is as follows. This is one of the proteins that bind and probably mediate the attachment of the 5S RNA into the large ribosomal subunit, where it forms part of the central protuberance. In the 70S ribosome it contacts protein S13 of the 30S subunit (bridge B1b), connecting the 2 subunits; this bridge is implicated in subunit movement. Contacts the P site tRNA; the 5S rRNA and some of its associated proteins might help stabilize positioning of ribosome-bound tRNAs. The chain is Large ribosomal subunit protein uL5 from Corynebacterium kroppenstedtii (strain DSM 44385 / JCM 11950 / CIP 105744 / CCUG 35717).